The sequence spans 334 residues: Formamidase (334 aa).

One can recognise a CN hydrolase domain in the interval 14 to 260; sequence FLVAAIQFPV…WEIVTGEIYP (247 aa). Glu60 (proton acceptor) is an active-site residue. Lys133 functions as the Proton donor in the catalytic mechanism. Cys166 (nucleophile) is an active-site residue.

This sequence belongs to the carbon-nitrogen hydrolase superfamily. Aliphatic amidase family.

It carries out the reaction formamide + H2O = formate + NH4(+). In terms of biological role, is an aliphatic amidase with a restricted substrate specificity, as it only hydrolyzes formamide. The protein is Formamidase of Helicobacter acinonychis (strain Sheeba).